The chain runs to 190 residues: C-type lectin domain family 5 member A (190 aa).

Residues 1–4 are Cytoplasmic-facing; that stretch reads MNWH. A helical; Signal-anchor for type II membrane protein membrane pass occupies residues 5–25; it reads MIISGLIVVVIKVVGMTFFLL. Residues 26-190 are Extracellular-facing; the sequence is YFPQVFGKSN…YRWICEMNAK (165 aa). 3 N-linked (GlcNAc...) asparagine glycosylation sites follow: Asn-51, Asn-146, and Asn-153. One can recognise a C-type lectin domain in the interval 80–186; sequence HQGKCFFFSF…CEVSYRWICE (107 aa). 2 disulfides stabilise this stretch: Cys-101/Cys-185 and Cys-163/Cys-177.

As to quaternary structure, monomer. Homodimer. The majority of CLEC5A is expressed as a monomeric form on macrophages. Interacts with TYROBP/DAP12. The interaction with TYROBP is required for CLEC5 cell surface expression. Interacts with HCST/DAP10. Forms a CLEC5A/TYROBP/HCST trimolecular complex depending almost solely on TYROBP. N-glycosylated. Contains sialic acid residues. Strong expression in bone marrow cells and thioglycollate-induced neutrophils (at protein level). Expressed on granulocytes and monocytes from bone marrow and peripheral blood. Expressed in macrophage cell line J-774, but not in T-cell lines, B-cell lines, or mast cell lines.

It localises to the cell membrane. Its function is as follows. Functions as a positive regulator of osteoclastogenesis. Cell surface receptor that signals via TYROBP. Regulates inflammatory responses. The chain is C-type lectin domain family 5 member A (Clec5a) from Mus musculus (Mouse).